We begin with the raw amino-acid sequence, 427 residues long: Glutamate-1-semialdehyde 2,1-aminomutase (427 aa).

Lys-266 carries the N6-(pyridoxal phosphate)lysine modification.

The protein belongs to the class-III pyridoxal-phosphate-dependent aminotransferase family. HemL subfamily. In terms of assembly, homodimer. Pyridoxal 5'-phosphate serves as cofactor.

It localises to the cytoplasm. It carries out the reaction (S)-4-amino-5-oxopentanoate = 5-aminolevulinate. The protein operates within porphyrin-containing compound metabolism; protoporphyrin-IX biosynthesis; 5-aminolevulinate from L-glutamyl-tRNA(Glu): step 2/2. This is Glutamate-1-semialdehyde 2,1-aminomutase from Aromatoleum aromaticum (strain DSM 19018 / LMG 30748 / EbN1) (Azoarcus sp. (strain EbN1)).